A 177-amino-acid chain; its full sequence is Large ribosomal subunit protein uL6 (177 aa).

It belongs to the universal ribosomal protein uL6 family. As to quaternary structure, part of the 50S ribosomal subunit.

Its function is as follows. This protein binds to the 23S rRNA, and is important in its secondary structure. It is located near the subunit interface in the base of the L7/L12 stalk, and near the tRNA binding site of the peptidyltransferase center. The sequence is that of Large ribosomal subunit protein uL6 from Afipia carboxidovorans (strain ATCC 49405 / DSM 1227 / KCTC 32145 / OM5) (Oligotropha carboxidovorans).